The sequence spans 513 residues: Microtubule-associated protein 70-5 (513 aa).

4 disordered regions span residues 1–20 (MTAAENPFVSDTSSLQSQLK), 60–81 (KLGATENQVDQKELERKKLEEE), 347–367 (FLTSGGGSKKRSSSQLRGSVT), and 393–413 (ANGLTDQHEEDSERKTEEDGN). The span at 9-18 (VSDTSSLQSQ) shows a compositional bias: polar residues. Residues 10–322 (SDTSSLQSQL…LKLRLKTIED (313 aa)) are a coiled coil. The segment covering 60–80 (KLGATENQVDQKELERKKLEE) has biased composition (basic and acidic residues). Positions 190–400 (FLEKINRQKV…ITANGLTDQH (211 aa)) are required for targeting to microtubules. Residues 426 to 501 (DRLQKEVIAL…EESKLCRKAK (76 aa)) adopt a coiled-coil conformation.

The protein belongs to the MAP70 family. Interacts with MAP70.1 and itself.

It localises to the cytoplasm. It is found in the cytoskeleton. In terms of biological role, plant-specific protein that interact with microtubules and regulates microtubule dynamics. May play a role in anisotropic cell expansion and organ growth. In association with MAP70.1, is essential for the normal banding pattern of secondary cell wall and for the proper development of xylem tracheary elements and wood formation. This chain is Microtubule-associated protein 70-5 (MAP70.5), found in Arabidopsis thaliana (Mouse-ear cress).